The primary structure comprises 577 residues: 5'-nucleotidase (577 aa).

The N-terminal stretch at 1–30 (MPRVPSASATGSSALLSLLCAFSLGRAAPF) is a signal peptide. Zn(2+) contacts are provided by D39, H41, D86, and N118. A glycan (N-linked (GlcNAc...) asparagine) is linked at N135. H221 and H244 together coordinate Zn(2+). Position 246 (N246) interacts with substrate. N-linked (GlcNAc...) asparagine glycosylation is found at N311 and N347. Disulfide bonds link C353–C358 and C365–C387. Residue R354 participates in substrate binding. Q390 and R395 together coordinate substrate. The N-linked (GlcNAc...) asparagine glycan is linked to N403. F417 is a binding site for substrate. The cysteines at positions 476 and 479 are disulfide-linked. Residue 500 to 506 (YIAEGGD) participates in substrate binding. S552 carries the GPI-anchor amidated serine lipid modification. A propeptide spans 553 to 577 (ATLPIINLKIGLSLFAFLTWFLHCS) (removed in mature form).

This sequence belongs to the 5'-nucleotidase family. Homodimer. Requires Zn(2+) as cofactor.

It localises to the cell membrane. It catalyses the reaction a ribonucleoside 5'-phosphate + H2O = a ribonucleoside + phosphate. Its function is as follows. Hydrolyzes extracellular nucleotides into membrane permeable nucleosides. The chain is 5'-nucleotidase from Diplobatis ommata (Ocellated electric ray).